The following is a 261-amino-acid chain: NAD kinase (261 aa).

Residue Asp-54 is the Proton acceptor of the active site. Residues 54–55 (DG), 123–124 (ND), Arg-150, Asp-152, and 163–168 (TAYSLS) each bind NAD(+).

It belongs to the NAD kinase family. A divalent metal cation serves as cofactor.

Its subcellular location is the cytoplasm. The enzyme catalyses NAD(+) + ATP = ADP + NADP(+) + H(+). Involved in the regulation of the intracellular balance of NAD and NADP, and is a key enzyme in the biosynthesis of NADP. Catalyzes specifically the phosphorylation on 2'-hydroxyl of the adenosine moiety of NAD to yield NADP. This chain is NAD kinase, found in Caldicellulosiruptor bescii (strain ATCC BAA-1888 / DSM 6725 / KCTC 15123 / Z-1320) (Anaerocellum thermophilum).